The sequence spans 287 residues: UPF0761 membrane protein MS0032 (287 aa).

Transmembrane regions (helical) follow at residues 37-57 (MLAIVPLVMVVFAIFSAFPMF), 93-113 (SMSAVGIISLIAVALLLINQI), 128-148 (FIFSMTIYWTLLTLGPIFIGM), 174-194 (LLSFVPFLLTWLSFSLIYTLV), 204-224 (AAVGALVAAIFFTLGKKAFAW), and 238-258 (AMATLPITLLWIQLSWLFILL).

Belongs to the UPF0761 family.

It localises to the cell inner membrane. This Mannheimia succiniciproducens (strain KCTC 0769BP / MBEL55E) protein is UPF0761 membrane protein MS0032.